A 149-amino-acid chain; its full sequence is SsrA-binding protein (149 aa).

This sequence belongs to the SmpB family.

It localises to the cytoplasm. Functionally, required for rescue of stalled ribosomes mediated by trans-translation. Binds to transfer-messenger RNA (tmRNA), required for stable association of tmRNA with ribosomes. tmRNA and SmpB together mimic tRNA shape, replacing the anticodon stem-loop with SmpB. tmRNA is encoded by the ssrA gene; the 2 termini fold to resemble tRNA(Ala) and it encodes a 'tag peptide', a short internal open reading frame. During trans-translation Ala-aminoacylated tmRNA acts like a tRNA, entering the A-site of stalled ribosomes, displacing the stalled mRNA. The ribosome then switches to translate the ORF on the tmRNA; the nascent peptide is terminated with the 'tag peptide' encoded by the tmRNA and targeted for degradation. The ribosome is freed to recommence translation, which seems to be the essential function of trans-translation. The polypeptide is SsrA-binding protein (Fervidobacterium nodosum (strain ATCC 35602 / DSM 5306 / Rt17-B1)).